A 528-amino-acid chain; its full sequence is Peptide chain release factor 3 (528 aa).

Residues 9–280 enclose the tr-type G domain; sequence RRRRTFAIIS…LKLAPAPAPR (272 aa). GTP-binding positions include 18–25, 86–90, and 140–143; these read SHPDAGKT, DTPGH, and NKLD.

It belongs to the TRAFAC class translation factor GTPase superfamily. Classic translation factor GTPase family. PrfC subfamily.

It is found in the cytoplasm. Increases the formation of ribosomal termination complexes and stimulates activities of RF-1 and RF-2. It binds guanine nucleotides and has strong preference for UGA stop codons. It may interact directly with the ribosome. The stimulation of RF-1 and RF-2 is significantly reduced by GTP and GDP, but not by GMP. This Symbiobacterium thermophilum (strain DSM 24528 / JCM 14929 / IAM 14863 / T) protein is Peptide chain release factor 3.